A 188-amino-acid polypeptide reads, in one-letter code: MAERGNDIRPGQVLDHNGALYLVVKTMHTQPGKGGAYIQAELKNLKTGAKYQERFRADGYVNRAIIEEVSFQYIFGDSSSLTLMNTENYEQISIPVELLGDKSVYLQENMILTLLFHKGQVISAKVPDYVVLEVVEAESVIKGQTASSSYKSAVLENGRRVSVPPFIKVGEKIVIYTPDDTYYERAKD.

Belongs to the elongation factor P family.

Its subcellular location is the cytoplasm. It participates in protein biosynthesis; polypeptide chain elongation. In terms of biological role, involved in peptide bond synthesis. Stimulates efficient translation and peptide-bond synthesis on native or reconstituted 70S ribosomes in vitro. Probably functions indirectly by altering the affinity of the ribosome for aminoacyl-tRNA, thus increasing their reactivity as acceptors for peptidyl transferase. This chain is Elongation factor P, found in Anaplasma phagocytophilum (strain HZ).